A 367-amino-acid chain; its full sequence is Quinolinate synthase (367 aa).

Iminosuccinate contacts are provided by histidine 45 and serine 62. Cysteine 109 serves as a coordination point for [4Fe-4S] cluster. Residues 140–142 (YVN) and serine 161 each bind iminosuccinate. Cysteine 229 is a binding site for [4Fe-4S] cluster. Iminosuccinate contacts are provided by residues 255–257 (HPE) and threonine 272. Cysteine 319 provides a ligand contact to [4Fe-4S] cluster.

The protein belongs to the quinolinate synthase family. Type 3 subfamily. It depends on [4Fe-4S] cluster as a cofactor.

Its subcellular location is the cytoplasm. The enzyme catalyses iminosuccinate + dihydroxyacetone phosphate = quinolinate + phosphate + 2 H2O + H(+). Its pathway is cofactor biosynthesis; NAD(+) biosynthesis; quinolinate from iminoaspartate: step 1/1. Catalyzes the condensation of iminoaspartate with dihydroxyacetone phosphate to form quinolinate. In Anoxybacillus flavithermus (strain DSM 21510 / WK1), this protein is Quinolinate synthase.